We begin with the raw amino-acid sequence, 319 residues long: Replication factor C small subunit (319 aa).

45–52 (GPPGTGKT) lines the ATP pocket.

It belongs to the activator 1 small subunits family. RfcS subfamily. In terms of assembly, heteropentamer composed of four small subunits (RfcS) and one large subunit (RfcL). Both subunits interact with PCNA.

Part of the RFC clamp loader complex which loads the PCNA sliding clamp onto DNA. The complex possesses DNA-dependent ATPase activity which is further stimulated by PCNA. The sequence is that of Replication factor C small subunit (rfcS) from Archaeoglobus fulgidus (strain ATCC 49558 / DSM 4304 / JCM 9628 / NBRC 100126 / VC-16).